Consider the following 612-residue polypeptide: Dihydroxy-acid dehydratase (612 aa).

Mg(2+) is bound at residue D81. C122 contacts [2Fe-2S] cluster. Residues D123 and K124 each contribute to the Mg(2+) site. K124 bears the N6-carboxylysine mark. Residue C193 participates in [2Fe-2S] cluster binding. E489 contacts Mg(2+). The Proton acceptor role is filled by S515.

Belongs to the IlvD/Edd family. In terms of assembly, homodimer. [2Fe-2S] cluster serves as cofactor. It depends on Mg(2+) as a cofactor.

It carries out the reaction (2R)-2,3-dihydroxy-3-methylbutanoate = 3-methyl-2-oxobutanoate + H2O. The catalysed reaction is (2R,3R)-2,3-dihydroxy-3-methylpentanoate = (S)-3-methyl-2-oxopentanoate + H2O. Its pathway is amino-acid biosynthesis; L-isoleucine biosynthesis; L-isoleucine from 2-oxobutanoate: step 3/4. It functions in the pathway amino-acid biosynthesis; L-valine biosynthesis; L-valine from pyruvate: step 3/4. Functionally, functions in the biosynthesis of branched-chain amino acids. Catalyzes the dehydration of (2R,3R)-2,3-dihydroxy-3-methylpentanoate (2,3-dihydroxy-3-methylvalerate) into 2-oxo-3-methylpentanoate (2-oxo-3-methylvalerate) and of (2R)-2,3-dihydroxy-3-methylbutanoate (2,3-dihydroxyisovalerate) into 2-oxo-3-methylbutanoate (2-oxoisovalerate), the penultimate precursor to L-isoleucine and L-valine, respectively. The sequence is that of Dihydroxy-acid dehydratase from Ectopseudomonas mendocina (strain ymp) (Pseudomonas mendocina).